Reading from the N-terminus, the 290-residue chain is uncharacterized protein (290 aa).

Helical transmembrane passes span 10–27 (FFVA…LLLI), 32–54 (VNYI…YFFS), 69–91 (ILVP…GVLI), 100–117 (VLAG…FFYF), and 121–143 (YLLM…NFEY). The stretch at 147–183 (VGKERKRILKLKKNYHKLLKEFSNFEREKRMFSNLRK) forms a coiled coil.

Its subcellular location is the cell membrane. This is an uncharacterized protein from Aquifex aeolicus (strain VF5).